The following is a 2376-amino-acid chain: Cell morphogenesis protein PAG1 (2376 aa).

A disordered region spans residues 1-30 (MASRFTFPPQRDQGIGFTFPPTNKAEGSSN). Serine 141 carries the post-translational modification Phosphoserine. The segment at 275–294 (SSSNTTSKYKHNNNTNNLPG) is disordered. Phosphoserine is present on serine 1144. Threonine 2264 carries the post-translational modification Phosphothreonine. 2 positions are modified to phosphoserine: serine 2267 and serine 2355.

It to S.pombe mor2. Associates with CBK1.

Seems to play a role in cell morphogenesis. This is Cell morphogenesis protein PAG1 (TAO3) from Saccharomyces cerevisiae (strain ATCC 204508 / S288c) (Baker's yeast).